The sequence spans 153 residues: Ribosome maturation factor RimP (153 aa).

The protein belongs to the RimP family.

The protein resides in the cytoplasm. Required for maturation of 30S ribosomal subunits. This is Ribosome maturation factor RimP from Clostridium botulinum (strain Alaska E43 / Type E3).